Here is a 147-residue protein sequence, read N- to C-terminus: Deoxyuridine 5'-triphosphate nucleotidohydrolase (147 aa).

Substrate-binding positions include 67 to 69 (RSG), Asn-80, and 84 to 86 (TID).

This sequence belongs to the dUTPase family. Mg(2+) serves as cofactor.

It catalyses the reaction dUTP + H2O = dUMP + diphosphate + H(+). It participates in pyrimidine metabolism; dUMP biosynthesis; dUMP from dCTP (dUTP route): step 2/2. Functionally, this enzyme is involved in nucleotide metabolism: it produces dUMP, the immediate precursor of thymidine nucleotides and it decreases the intracellular concentration of dUTP so that uracil cannot be incorporated into DNA. The sequence is that of Deoxyuridine 5'-triphosphate nucleotidohydrolase from Anaeromyxobacter dehalogenans (strain 2CP-1 / ATCC BAA-258).